The sequence spans 233 residues: MRSFFVTGTDTGVGKTIVSCGLAAAFRQKQADIGVFKPFLSGVPRTHPESDTSLLKDMSQTALSHEEITPFEWKEPLAPYTAAMLEGKSVSMADVMAHWSKIKNRHECFIVEGAGGISVPLGENYLVSDLIKAMELPAVIVTRPDLGTINHTYLTVEYAKNMGIEVLGIIINGVRSRPGLDEKTNPSMIETLCKVPILGITPKLDHVSSENIQHMIEKHIDVSSFMNLTQMGR.

12–17 (GVGKTI) is a binding site for ATP. Thr16 contributes to the Mg(2+) binding site. Lys37 is an active-site residue. Position 41 (Ser41) interacts with substrate. ATP is bound by residues Asp51, 112–115 (EGAG), and 202–204 (PKL). Residues Asp51 and Glu112 each contribute to the Mg(2+) site.

Belongs to the dethiobiotin synthetase family. As to quaternary structure, homodimer. It depends on Mg(2+) as a cofactor.

Its subcellular location is the cytoplasm. The enzyme catalyses (7R,8S)-7,8-diammoniononanoate + CO2 + ATP = (4R,5S)-dethiobiotin + ADP + phosphate + 3 H(+). Its pathway is cofactor biosynthesis; biotin biosynthesis; biotin from 7,8-diaminononanoate: step 1/2. Functionally, catalyzes a mechanistically unusual reaction, the ATP-dependent insertion of CO2 between the N7 and N8 nitrogen atoms of 7,8-diaminopelargonic acid (DAPA, also called 7,8-diammoniononanoate) to form a ureido ring. The sequence is that of ATP-dependent dethiobiotin synthetase BioD from Bacillus velezensis (strain DSM 23117 / BGSC 10A6 / LMG 26770 / FZB42) (Bacillus amyloliquefaciens subsp. plantarum).